The following is a 75-amino-acid chain: Small ribosomal subunit protein bS18 (75 aa).

It belongs to the bacterial ribosomal protein bS18 family. As to quaternary structure, part of the 30S ribosomal subunit. Forms a tight heterodimer with protein bS6.

In terms of biological role, binds as a heterodimer with protein bS6 to the central domain of the 16S rRNA, where it helps stabilize the platform of the 30S subunit. In Shewanella frigidimarina (strain NCIMB 400), this protein is Small ribosomal subunit protein bS18.